Here is a 250-residue protein sequence, read N- to C-terminus: MQICLIDETGTGDGALSVLATRWGLEHDEDNLMALVLTPEHLELRKRDEPKLGGIFVDFVGGAMAHRRKFGGGRGEAVAKAVGIKGDYLPDVVDATAGLGRDAFVLASVGCRVRMLERNPVVAALLDDGLARGYADAEIGGWLQERLQLIHASSLTALTDITPRPQVVYLDPMFPHKQKSALVKKEMRVFQSLVGPDLDADGLLEPARLLASKRVVVKRPDYAPPLANVATPNAVVTKGHRFDIYAGTPV.

S-adenosyl-L-methionine contacts are provided by residues 101 to 102 (RD), 117 to 118 (ER), 153 to 154 (SS), and Asp171.

The protein belongs to the methyltransferase superfamily. RsmJ family.

Its subcellular location is the cytoplasm. The catalysed reaction is guanosine(1516) in 16S rRNA + S-adenosyl-L-methionine = N(2)-methylguanosine(1516) in 16S rRNA + S-adenosyl-L-homocysteine + H(+). Its function is as follows. Specifically methylates the guanosine in position 1516 of 16S rRNA. The sequence is that of Ribosomal RNA small subunit methyltransferase J from Shigella dysenteriae serotype 1 (strain Sd197).